The following is a 1044-amino-acid chain: Isoleucine--tRNA ligase (1044 aa).

The 'HIGH' region motif lies at 48–58; the sequence is PFATGLPHFGH. The 'KMSKS' region motif lies at 594–598; it reads KMSKS. Lys-597 is an ATP binding site.

It belongs to the class-I aminoacyl-tRNA synthetase family. IleS type 2 subfamily. Monomer. It depends on Zn(2+) as a cofactor.

The protein resides in the cytoplasm. The catalysed reaction is tRNA(Ile) + L-isoleucine + ATP = L-isoleucyl-tRNA(Ile) + AMP + diphosphate. Its function is as follows. Catalyzes the attachment of isoleucine to tRNA(Ile). As IleRS can inadvertently accommodate and process structurally similar amino acids such as valine, to avoid such errors it has two additional distinct tRNA(Ile)-dependent editing activities. One activity is designated as 'pretransfer' editing and involves the hydrolysis of activated Val-AMP. The other activity is designated 'posttransfer' editing and involves deacylation of mischarged Val-tRNA(Ile). In Borrelia hermsii (strain HS1 / DAH), this protein is Isoleucine--tRNA ligase.